The following is a 160-amino-acid chain: Phosphopantetheine adenylyltransferase (160 aa).

Residue Ser9 coordinates substrate. ATP is bound by residues 9–10 and His17; that span reads SF. The substrate site is built by Lys41, Ile73, and Lys87. ATP-binding positions include 88–90, Glu98, and 122–128; these read GLR and YSFVSSS.

This sequence belongs to the bacterial CoaD family. Homohexamer. Requires Mg(2+) as cofactor.

The protein localises to the cytoplasm. The catalysed reaction is (R)-4'-phosphopantetheine + ATP + H(+) = 3'-dephospho-CoA + diphosphate. Its pathway is cofactor biosynthesis; coenzyme A biosynthesis; CoA from (R)-pantothenate: step 4/5. Its function is as follows. Reversibly transfers an adenylyl group from ATP to 4'-phosphopantetheine, yielding dephospho-CoA (dPCoA) and pyrophosphate. The chain is Phosphopantetheine adenylyltransferase from Mycolicibacterium gilvum (strain PYR-GCK) (Mycobacterium gilvum (strain PYR-GCK)).